The following is a 316-amino-acid chain: Ribosomal RNA large subunit methyltransferase F (316 aa).

Belongs to the methyltransferase superfamily. METTL16/RlmF family.

Its subcellular location is the cytoplasm. It carries out the reaction adenosine(1618) in 23S rRNA + S-adenosyl-L-methionine = N(6)-methyladenosine(1618) in 23S rRNA + S-adenosyl-L-homocysteine + H(+). Specifically methylates the adenine in position 1618 of 23S rRNA. This is Ribosomal RNA large subunit methyltransferase F from Pseudomonas entomophila (strain L48).